The primary structure comprises 205 residues: Purine catabolism protein PucB (205 aa).

It participates in purine metabolism; hypoxanthine degradation. Functionally, required for xanthine dehydrogenase activity. Could be involved in formation of the molybdenum cofactor required by xanthine dehydrogenase. This Bacillus subtilis (strain 168) protein is Purine catabolism protein PucB (pucB).